The following is a 380-amino-acid chain: Cytochrome b (380 aa).

The next 4 membrane-spanning stretches (helical) occupy residues 34–54, 78–99, 114–134, and 179–199; these read FGSLLAVCLITQILTGLLLAM, WLIRNLHANGASFFFICIFLHI, WNTGVILLLTLMATAFVGYVL, and FFALHFLLPFVIAGITIIHLT. His84 and His98 together coordinate heme b. Positions 183 and 197 each coordinate heme b. Position 202 (His202) interacts with a ubiquinone. The next 4 helical transmembrane spans lie at 227-247, 289-309, 321-341, and 348-368; these read IKDILGLALMFIPFLTLTLFS, LGGVLALAASVLILLLIPFLH, LSQTLFWLLVANLLILTWIGS, and FIIIGQMASLSYFSILLILFP.

This sequence belongs to the cytochrome b family. As to quaternary structure, the cytochrome bc1 complex contains 11 subunits: 3 respiratory subunits (MT-CYB, CYC1 and UQCRFS1), 2 core proteins (UQCRC1 and UQCRC2) and 6 low-molecular weight proteins (UQCRH/QCR6, UQCRB/QCR7, UQCRQ/QCR8, UQCR10/QCR9, UQCR11/QCR10 and a cleavage product of UQCRFS1). This cytochrome bc1 complex then forms a dimer. The cofactor is heme b.

The protein localises to the mitochondrion inner membrane. Its function is as follows. Component of the ubiquinol-cytochrome c reductase complex (complex III or cytochrome b-c1 complex) that is part of the mitochondrial respiratory chain. The b-c1 complex mediates electron transfer from ubiquinol to cytochrome c. Contributes to the generation of a proton gradient across the mitochondrial membrane that is then used for ATP synthesis. This is Cytochrome b (MT-CYB) from Alectoris graeca (Rock partridge).